Reading from the N-terminus, the 280-residue chain is Phosphatidylglycerol--prolipoprotein diacylglyceryl transferase (280 aa).

Helical transmembrane passes span 12-32 (FGPF…LIGL), 52-72 (LLPL…VAFE), 86-106 (IWEG…TLIL), and 115-133 (FWDV…QSIG). A 1,2-diacyl-sn-glycero-3-phospho-(1'-sn-glycerol) is bound at residue arginine 134. 3 consecutive transmembrane segments (helical) span residues 173 to 193 (PTFL…ILLF), 203 to 223 (LPAG…RVWI), and 246 to 266 (IAQL…WWLY).

The protein belongs to the Lgt family.

It localises to the cell inner membrane. It carries out the reaction L-cysteinyl-[prolipoprotein] + a 1,2-diacyl-sn-glycero-3-phospho-(1'-sn-glycerol) = an S-1,2-diacyl-sn-glyceryl-L-cysteinyl-[prolipoprotein] + sn-glycerol 1-phosphate + H(+). The protein operates within protein modification; lipoprotein biosynthesis (diacylglyceryl transfer). Catalyzes the transfer of the diacylglyceryl group from phosphatidylglycerol to the sulfhydryl group of the N-terminal cysteine of a prolipoprotein, the first step in the formation of mature lipoproteins. In Synechococcus sp. (strain CC9902), this protein is Phosphatidylglycerol--prolipoprotein diacylglyceryl transferase.